Consider the following 237-residue polypeptide: Large ribosomal subunit protein uL22m (237 aa).

This sequence belongs to the universal ribosomal protein uL22 family.

The protein localises to the mitochondrion. In Dictyostelium discoideum (Social amoeba), this protein is Large ribosomal subunit protein uL22m (mrpl22).